Here is a 509-residue protein sequence, read N- to C-terminus: Histidine--tRNA ligase, cytoplasmic (509 aa).

Alanine 2 bears the N-acetylalanine mark. The region spanning 3–59 is the WHEP-TRS domain; it reads ERAALEELVKLQGERVRGLKQQKASAELIEEEVAKLLKLKAQLGPDESKQKFVLKTP. Serine 66 bears the Phosphoserine mark. L-histidine contacts are provided by residues 130 to 132, arginine 157, glutamine 173, aspartate 177, arginine 326, and 330 to 331; these read DLT and YY. A Phosphoserine modification is found at serine 356.

This sequence belongs to the class-II aminoacyl-tRNA synthetase family. In terms of assembly, homodimer.

The protein resides in the cytoplasm. It catalyses the reaction tRNA(His) + L-histidine + ATP = L-histidyl-tRNA(His) + AMP + diphosphate + H(+). Its function is as follows. Catalyzes the ATP-dependent ligation of histidine to the 3'-end of its cognate tRNA, via the formation of an aminoacyl-adenylate intermediate (His-AMP). Plays a role in axon guidance. The polypeptide is Histidine--tRNA ligase, cytoplasmic (HARS1) (Pongo abelii (Sumatran orangutan)).